A 100-amino-acid chain; its full sequence is MAKSSVKEREKKREQLIKRYEKKRKEIKQQIIEASTLKQKWQAYEKLSQLPKDSSPVRQRRRCWLTGRSRGVYRYFGLCRHMVRKMAHEGLLAGVTKSSW.

It belongs to the universal ribosomal protein uS14 family. As to quaternary structure, part of the 30S ribosomal subunit.

The protein localises to the plastid. It is found in the chloroplast. In terms of biological role, binds 16S rRNA, required for the assembly of 30S particles. The chain is Small ribosomal subunit protein uS14c from Cyanidioschyzon merolae (strain NIES-3377 / 10D) (Unicellular red alga).